Here is a 24-residue protein sequence, read N- to C-terminus: Humanin-like 1 (24 aa).

This sequence belongs to the humanin family. In terms of tissue distribution, highly expressed in the kidney, heart muscle and testis.

It is found in the secreted. The protein localises to the cytoplasm. Functionally, plays a role as a neuroprotective and antiapoptotic factor. This is Humanin-like 1 from Homo sapiens (Human).